The chain runs to 364 residues: DNA replication and repair protein RecF (364 aa).

ATP is bound at residue 30 to 37; the sequence is GDNGAGKT.

It belongs to the RecF family.

Its subcellular location is the cytoplasm. The RecF protein is involved in DNA metabolism; it is required for DNA replication and normal SOS inducibility. RecF binds preferentially to single-stranded, linear DNA. It also seems to bind ATP. The chain is DNA replication and repair protein RecF from Stenotrophomonas maltophilia (strain R551-3).